We begin with the raw amino-acid sequence, 481 residues long: tRNA pseudouridine(38/39) synthase (481 aa).

N-acetylalanine is present on A2. A compositionally biased stretch (basic and acidic residues) spans 29-41 (KKEQAKNKEDSNI). Residues 29-50 (KKEQAKNKEDSNIRENSAGAGK) form a disordered region. The active-site Nucleophile is the D118. Y195 contacts substrate. Residues T456, T466, and T468 each carry the phosphothreonine modification.

The protein belongs to the tRNA pseudouridine synthase TruA family.

It is found in the nucleus. It carries out the reaction uridine(38/39) in tRNA = pseudouridine(38/39) in tRNA. Its function is as follows. Formation of pseudouridine at position 39 in the anticodon stem and loop of transfer RNAs. The chain is tRNA pseudouridine(38/39) synthase (PUS3) from Homo sapiens (Human).